A 442-amino-acid chain; its full sequence is tRNA modification GTPase MnmE (442 aa).

(6S)-5-formyl-5,6,7,8-tetrahydrofolate contacts are provided by R21, E79, and K118. The TrmE-type G domain maps to 214–367; that stretch reads GFKIAIVGKP…LKEELQNYLN (154 aa). N224 is a binding site for K(+). GTP contacts are provided by residues 224–229, 243–249, and 268–271; these read NVGKSS, SDIAGTT, and DTAG. S228 contributes to the Mg(2+) binding site. The K(+) site is built by S243, I245, and T248. T249 contributes to the Mg(2+) binding site. K442 lines the (6S)-5-formyl-5,6,7,8-tetrahydrofolate pocket.

It belongs to the TRAFAC class TrmE-Era-EngA-EngB-Septin-like GTPase superfamily. TrmE GTPase family. Homodimer. Heterotetramer of two MnmE and two MnmG subunits. K(+) is required as a cofactor.

Its subcellular location is the cytoplasm. Functionally, exhibits a very high intrinsic GTPase hydrolysis rate. Involved in the addition of a carboxymethylaminomethyl (cmnm) group at the wobble position (U34) of certain tRNAs, forming tRNA-cmnm(5)s(2)U34. This chain is tRNA modification GTPase MnmE, found in Campylobacter jejuni subsp. jejuni serotype O:2 (strain ATCC 700819 / NCTC 11168).